The following is a 307-amino-acid chain: Ventral anterior homeobox 2 (307 aa).

Disordered regions lie at residues 1 to 70, 155 to 175, and 197 to 254; these read MFDQ…DKLL, RTKQKKDQTKDTDKRSSSTSE, and PPPN…PSPR. Residues 25 to 38 show a composition bias toward basic and acidic residues; that stretch reads CRDRGRESKSRTEV. Residues 46-62 show a composition bias toward low complexity; it reads SSTDTPGTSASTPTSSS. Positions 103 to 162 form a DNA-binding region, homeobox; that stretch reads PKRTRTSFTAEQLYRLELEFQRCQYVVGRERTELARQLNLSETQVKVWFQNRRTKQKKDQ. The segment covering 159-170 has biased composition (basic and acidic residues); sequence KKDQTKDTDKRS. The span at 202–249 shows a compositional bias: low complexity; sequence LLAHPHPGNGSLLGSPSVSTSSGVSSSTTPPGAGSGTFGLSLSSLSGT.

It belongs to the EMX homeobox family. As to expression, expressed in the anterior neural keel and later in the preoptic area, optic stalk and ventral retina.

It is found in the nucleus. Functionally, transcription factor that may function in dorsoventral specification of the forebrain. Required for closure of the choroid fissure and together with vax1 is required for optic nerve differentiation and to limit retinal development to the optic cup. This Danio rerio (Zebrafish) protein is Ventral anterior homeobox 2 (vax2).